Here is a 650-residue protein sequence, read N- to C-terminus: Acetyl-coenzyme A synthetase (650 aa).

CoA-binding positions include 191-194, Thr311, and Asn335; that span reads RAGR. ATP contacts are provided by residues 387-389, 411-416, Asp500, and Arg515; these read GEP and DTWWQT. Ser523 serves as a coordination point for CoA. Arg526 is a binding site for ATP. Residues Val537, His539, and Val542 each contribute to the Mg(2+) site. Arg584 contacts CoA. N6-acetyllysine is present on Lys609.

This sequence belongs to the ATP-dependent AMP-binding enzyme family. Mg(2+) serves as cofactor. In terms of processing, acetylated. Deacetylation by the SIR2-homolog deacetylase activates the enzyme.

It catalyses the reaction acetate + ATP + CoA = acetyl-CoA + AMP + diphosphate. Catalyzes the conversion of acetate into acetyl-CoA (AcCoA), an essential intermediate at the junction of anabolic and catabolic pathways. AcsA undergoes a two-step reaction. In the first half reaction, AcsA combines acetate with ATP to form acetyl-adenylate (AcAMP) intermediate. In the second half reaction, it can then transfer the acetyl group from AcAMP to the sulfhydryl group of CoA, forming the product AcCoA. The chain is Acetyl-coenzyme A synthetase from Shewanella halifaxensis (strain HAW-EB4).